A 28-amino-acid chain; its full sequence is uncharacterized protein (28 aa).

A helical membrane pass occupies residues 5–27 (SAFHACNIIFLPLVKCASATIML).

It is found in the membrane. This is an uncharacterized protein from Saccharomyces cerevisiae (strain ATCC 204508 / S288c) (Baker's yeast).